A 208-amino-acid chain; its full sequence is Protein Nef (208 aa).

The interval 1-33 (MGGKWSKRMSGWSAVRERMKRAEPAEPAADGVG) is disordered. Glycine 2 carries the N-myristoyl glycine; by host lipid modification. The residue at position 6 (serine 6) is a Phosphoserine; by host. The segment covering 15–24 (VRERMKRAEP) has biased composition (basic and acidic residues). Positions 64–67 (EDED) are acidic; interacts with host PACS1 and PACS2; stabilizes the interaction of NEF/MHC-I with host AP1M1; necessary for MHC-I internalization. Residues 71–80 (PVRPQVPLRP) are SH3-binding; interaction with Src family tyrosine kinases. Positions 74–77 (PQVP) match the PxxP; stabilizes the interaction of NEF/MHC-I with host AP1M1; necessary for MHC-I internalization motif. Positions 110-126 (DILDLWIHHTQGYFPDW) are mediates dimerization, Nef-PTE1 interaction. Residues 150-182 (VDPDYVEEANAGENNSLLHPMSQHGMDDPEKEV) form a binding to ATP6V1H region. Positions 166–167 (LL) match the Dileucine internalization motif; necessary for CD4 internalization motif. Positions 176 to 177 (DD) match the Diacidic; necessary for CD4 internalization motif.

This sequence belongs to the lentivirus primate group Nef protein family. Monomer; cytosolic form. Homodimer; membrane bound form. Interacts with Nef associated p21-activated kinase (PAK2); this interaction activates PAK2. Associates with the Nef-MHC-I-AP1 complex; this complex is required for MHC-I internalization. Interacts (via C-terminus) with host PI3-kinase. Interacts with host PACS1; this interaction seems to be weak. Interacts with host PACS2. Interacts with host LCK and MAPK3; these interactions inhibit the kinase activity of the latter. Interacts with host ATP6V1H; this interaction may play a role in CD4 endocytosis. Associates with the CD4-Nef-AP2 complex; this complex is required for CD4 internalization. Interacts with host AP2 subunit alpha and AP2 subunit sigma2. Interacts with TCR-zeta chain; this interaction up-regulates the Fas ligand (FasL) surface expression. Interacts with host HCK, LYN, and SRC; these interactions activate the Src family kinases. Interacts with MAP3K5; this interaction inhibits the Fas and TNFR-mediated death signals. Interacts with beta-COP and PTE1. Interacts with human RACK1; this increases Nef phosphorylation by PKC. Interacts with TP53; this interaction decreases the half-life of TP53, protecting the infected cell against p53-mediated apoptosis. In terms of processing, the virion-associated Nef proteins are cleaved by the viral protease to release the soluble C-terminal core protein. Nef is probably cleaved concomitantly with viral structural proteins on maturation of virus particles. Post-translationally, myristoylated. Phosphorylated on serine residues, probably by host PKCdelta and theta.

The protein localises to the host cell membrane. It is found in the virion. Its subcellular location is the secreted. It localises to the host Golgi apparatus membrane. In terms of biological role, factor of infectivity and pathogenicity, required for optimal virus replication. Alters numerous pathways of T-lymphocyte function and down-regulates immunity surface molecules in order to evade host defense and increase viral infectivity. Alters the functionality of other immunity cells, like dendritic cells, monocytes/macrophages and NK cells. In infected CD4(+) T-lymphocytes, down-regulates the surface MHC-I, mature MHC-II, CD4, CD28, CCR5 and CXCR4 molecules. Mediates internalization and degradation of host CD4 through the interaction of with the cytoplasmic tail of CD4, the recruitment of AP-2 (clathrin adapter protein complex 2), internalization through clathrin coated pits, and subsequent transport to endosomes and lysosomes for degradation. Diverts host MHC-I molecules to the trans-Golgi network-associated endosomal compartments by an endocytic pathway to finally target them for degradation. MHC-I down-regulation may involve AP-1 (clathrin adapter protein complex 1) or possibly Src family kinase-ZAP70/Syk-PI3K cascade recruited by PACS2. In consequence infected cells are masked for immune recognition by cytotoxic T-lymphocytes. Decreasing the number of immune receptors also prevents reinfection by more HIV particles (superinfection). Down-regulates host SERINC3 and SERINC5 thereby excluding these proteins from the viral particles. Virion infectivity is drastically higher when SERINC3 or SERINC5 are excluded from the viral envelope, because these host antiviral proteins impair the membrane fusion event necessary for subsequent virion penetration. Its function is as follows. Bypasses host T-cell signaling by inducing a transcriptional program nearly identical to that of anti-CD3 cell activation. Interaction with TCR-zeta chain up-regulates the Fas ligand (FasL). Increasing surface FasL molecules and decreasing surface MHC-I molecules on infected CD4(+) cells send attacking cytotoxic CD8+ T-lymphocytes into apoptosis. Functionally, plays a role in optimizing the host cell environment for viral replication without causing cell death by apoptosis. Protects the infected cells from apoptosis in order to keep them alive until the next virus generation is ready to strike. Inhibits the Fas and TNFR-mediated death signals by blocking MAP3K5/ASK1. Decreases the half-life of TP53, protecting the infected cell against p53-mediated apoptosis. Inhibits the apoptotic signals regulated by the Bcl-2 family proteins through the formation of a Nef/PI3-kinase/PAK2 complex that leads to activation of PAK2 and induces phosphorylation of host BAD. In terms of biological role, extracellular Nef protein targets CD4(+) T-lymphocytes for apoptosis by interacting with CXCR4 surface receptors. The protein is Protein Nef of Human immunodeficiency virus type 1 group M subtype B (isolate SF162) (HIV-1).